The sequence spans 341 residues: MNIEDFDYHLPESLIAQTPLKNRDQSRLLVLSKDTGELTHLHFRDVIHYFEPGDTLVLNDTRVMPARLFGLKEETGAKVEMLMLTQIEGNDWEVLLKPAKRIKKGHRLNFGDGKIVAECIEELEQGGRIMRLHYEGILQERLDELGEMPLPPYIKERLDDPDRYQTVYAKESGSAAAPTAGLHFTDDLLNKIKQKGVHIAFITLHVGLGTFRPVSVENIDDHEMHSEYYQMTQETADLLNKTKESGKRVISVGTTSTRTLETIRRDHPQFVATSGWTDIFIYPGFEFKAIDGLITNFHLPKSTLVMLVSAFSNKKYILNAYHKAVEMEYRFFSFGDAMLII.

This sequence belongs to the QueA family. As to quaternary structure, monomer.

The protein resides in the cytoplasm. The enzyme catalyses 7-aminomethyl-7-carbaguanosine(34) in tRNA + S-adenosyl-L-methionine = epoxyqueuosine(34) in tRNA + adenine + L-methionine + 2 H(+). It participates in tRNA modification; tRNA-queuosine biosynthesis. In terms of biological role, transfers and isomerizes the ribose moiety from AdoMet to the 7-aminomethyl group of 7-deazaguanine (preQ1-tRNA) to give epoxyqueuosine (oQ-tRNA). This is S-adenosylmethionine:tRNA ribosyltransferase-isomerase from Staphylococcus epidermidis (strain ATCC 12228 / FDA PCI 1200).